Reading from the N-terminus, the 204-residue chain is 5'-deoxynucleotidase HDDC2 (204 aa).

Ala-2 carries the N-acetylalanine modification. Phosphoserine is present on residues Ser-3 and Ser-5. An HD domain is found at 46-148 (VSDHMYRMAV…VKQLDQCEMI (103 aa)). A divalent metal cation contacts are provided by His-49, His-77, Asp-78, Glu-81, Asp-86, Ile-87, and Asp-143. Ser-204 carries the phosphoserine modification.

It belongs to the HDDC2 family. Homodimer. Mn(2+) serves as cofactor. The cofactor is Co(2+). Mg(2+) is required as a cofactor.

The enzyme catalyses a 2'-deoxyribonucleoside 5'-phosphate + H2O = a 2'-deoxyribonucleoside + phosphate. In terms of biological role, catalyzes the dephosphorylation of the nucleoside 5'-monophosphates deoxyadenosine monophosphate (dAMP), deoxycytidine monophosphate (dCMP), deoxyguanosine monophosphate (dGMP) and deoxythymidine monophosphate (dTMP). This chain is 5'-deoxynucleotidase HDDC2 (HDDC2), found in Homo sapiens (Human).